A 651-amino-acid chain; its full sequence is Acetyl-coenzyme A synthetase (651 aa).

Residues R189–K192, T311, and N335 contribute to the CoA site. ATP-binding positions include G387–P389, D411–T416, D500, and R515. Residue S523 coordinates CoA. Position 526 (R526) interacts with ATP. V537, H539, and V542 together coordinate Mg(2+). R586 provides a ligand contact to CoA. N6-acetyllysine is present on K611.

The protein belongs to the ATP-dependent AMP-binding enzyme family. Requires Mg(2+) as cofactor. In terms of processing, acetylated. Deacetylation by the SIR2-homolog deacetylase activates the enzyme.

The catalysed reaction is acetate + ATP + CoA = acetyl-CoA + AMP + diphosphate. Functionally, catalyzes the conversion of acetate into acetyl-CoA (AcCoA), an essential intermediate at the junction of anabolic and catabolic pathways. AcsA undergoes a two-step reaction. In the first half reaction, AcsA combines acetate with ATP to form acetyl-adenylate (AcAMP) intermediate. In the second half reaction, it can then transfer the acetyl group from AcAMP to the sulfhydryl group of CoA, forming the product AcCoA. This Brucella suis (strain ATCC 23445 / NCTC 10510) protein is Acetyl-coenzyme A synthetase.